The primary structure comprises 132 residues: UPF0292 protein PYRAB04740 (132 aa).

The region spanning 20-100 (DGAIIVEGPR…KVDTETRRSL (81 aa)) is the Toprim domain. Mg(2+) contacts are provided by glutamate 26, aspartate 69, and aspartate 71.

Belongs to the UPF0292 family. The cofactor is Mg(2+).

This is UPF0292 protein PYRAB04740 from Pyrococcus abyssi (strain GE5 / Orsay).